A 320-amino-acid chain; its full sequence is ATP-dependent 6-phosphofructokinase (320 aa).

Gly12 is a binding site for ATP. Residue 22-26 coordinates ADP; that stretch reads RGVVR. ATP contacts are provided by residues 73–74 and 103–106; these read RF and GDGS. Asp104 is a Mg(2+) binding site. Residue 126-128 participates in substrate binding; that stretch reads TID. Asp128 serves as the catalytic Proton acceptor. An ADP-binding site is contributed by Arg155. Residues Arg163 and 170–172 each bind substrate; that span reads MGR. Residues 186-188, Lys212, and 214-216 each bind ADP; these read GCE and KKH. Residues Glu223, Arg244, and 250–253 each bind substrate; that span reads HIQR.

Belongs to the phosphofructokinase type A (PFKA) family. ATP-dependent PFK group I subfamily. Prokaryotic clade 'B1' sub-subfamily. Homotetramer. Mg(2+) serves as cofactor.

The protein resides in the cytoplasm. It carries out the reaction beta-D-fructose 6-phosphate + ATP = beta-D-fructose 1,6-bisphosphate + ADP + H(+). Its pathway is carbohydrate degradation; glycolysis; D-glyceraldehyde 3-phosphate and glycerone phosphate from D-glucose: step 3/4. With respect to regulation, allosterically activated by ADP and other diphosphonucleosides, and allosterically inhibited by phosphoenolpyruvate. In terms of biological role, catalyzes the phosphorylation of D-fructose 6-phosphate to fructose 1,6-bisphosphate by ATP, the first committing step of glycolysis. In Vibrio campbellii (strain ATCC BAA-1116), this protein is ATP-dependent 6-phosphofructokinase.